The primary structure comprises 274 residues: 2,3,4,5-tetrahydropyridine-2,6-dicarboxylate N-succinyltransferase (274 aa).

Residues Arg-104 and Asp-141 each contribute to the substrate site.

Belongs to the transferase hexapeptide repeat family. As to quaternary structure, homotrimer.

Its subcellular location is the cytoplasm. The catalysed reaction is (S)-2,3,4,5-tetrahydrodipicolinate + succinyl-CoA + H2O = (S)-2-succinylamino-6-oxoheptanedioate + CoA. It participates in amino-acid biosynthesis; L-lysine biosynthesis via DAP pathway; LL-2,6-diaminopimelate from (S)-tetrahydrodipicolinate (succinylase route): step 1/3. The polypeptide is 2,3,4,5-tetrahydropyridine-2,6-dicarboxylate N-succinyltransferase (Shigella boydii serotype 4 (strain Sb227)).